The following is a 160-amino-acid chain: Deoxyuridine 5'-triphosphate nucleotidohydrolase (160 aa).

Substrate-binding positions include 76-78 (RSG), N89, and 93-95 (TID). Residues 139-149 (HTLSDTERGED) are compositionally biased toward basic and acidic residues. The tract at residues 139-160 (HTLSDTERGEDGFGSTGHGSHQ) is disordered. A compositionally biased stretch (gly residues) spans 150-160 (GFGSTGHGSHQ).

Belongs to the dUTPase family. It depends on Mg(2+) as a cofactor.

The enzyme catalyses dUTP + H2O = dUMP + diphosphate + H(+). The protein operates within pyrimidine metabolism; dUMP biosynthesis; dUMP from dCTP (dUTP route): step 2/2. Functionally, this enzyme is involved in nucleotide metabolism: it produces dUMP, the immediate precursor of thymidine nucleotides and it decreases the intracellular concentration of dUTP so that uracil cannot be incorporated into DNA. This chain is Deoxyuridine 5'-triphosphate nucleotidohydrolase, found in Beijerinckia indica subsp. indica (strain ATCC 9039 / DSM 1715 / NCIMB 8712).